The primary structure comprises 227 residues: Cytidylate kinase (227 aa).

Residue 12 to 20 (GPSGAGKGT) participates in ATP binding.

Belongs to the cytidylate kinase family. Type 1 subfamily.

It is found in the cytoplasm. It catalyses the reaction CMP + ATP = CDP + ADP. The catalysed reaction is dCMP + ATP = dCDP + ADP. This Shigella sonnei (strain Ss046) protein is Cytidylate kinase.